The sequence spans 206 residues: Large ribosomal subunit protein mL62 (206 aa).

The N-terminal 29 residues, 1–29 (MATAWCLPWTLRRAGAWLLTPPLRCPRRA), are a transit peptide targeting the mitochondrion.

Belongs to the prokaryotic/mitochondrial release factor family. Mitochondrion-specific ribosomal protein mL62 subfamily. In terms of assembly, component of the mitochondrial 39S ribosomal subunit.

It localises to the mitochondrion. It catalyses the reaction an N-acyl-L-alpha-aminoacyl-tRNA + H2O = an N-acyl-L-amino acid + a tRNA + H(+). Essential peptidyl-tRNA hydrolase component of the mitochondrial large ribosomal subunit. Acts as a codon-independent translation release factor that has lost all stop codon specificity and directs the termination of translation in mitochondrion, possibly in case of abortive elongation. May be involved in the hydrolysis of peptidyl-tRNAs that have been prematurely terminated and thus in the recycling of stalled mitochondrial ribosomes. In Ailuropoda melanoleuca (Giant panda), this protein is Large ribosomal subunit protein mL62.